Consider the following 595-residue polypeptide: Alginate biosynthesis sensor protein KinB (595 aa).

Residues 1-12 (MSMPLPMKLRTR) are Cytoplasmic-facing. A helical membrane pass occupies residues 13–33 (LFLSISALITVSLFGLLLGLF). At 34–167 (SVMQLGRAQE…SDAETSARHR (134 aa)) the chain is on the periplasmic side. Residues 168–188 (AYLVAGLLGLVGVAILLIGFV) form a helical membrane-spanning segment. Over 189-595 (TAHSIARRFG…GARFYMLLPV (407 aa)) the chain is Cytoplasmic. The 53-residue stretch at 195–247 (RRFGAPIETLARAADRIGEGDFDVTLPMTNVAEVGQLTRRFGLMAEALRQYRK) folds into the HAMP domain. In terms of domain architecture, PAS spans 258–323 (RRLQAVLDSI…AVEKALLGEV (66 aa)). One can recognise a PAC domain in the interval 327–369 (AMPDLVVDVAGESRLLAWSLYPVTHPGGHSVGAVLVVRDVTEQ). A Histidine kinase domain is found at 382–595 (RASHELRTPV…GARFYMLLPV (214 aa)). At H385 the chain carries Phosphohistidine; by autocatalysis.

Post-translationally, autophosphorylated.

The protein resides in the cell inner membrane. The catalysed reaction is ATP + protein L-histidine = ADP + protein N-phospho-L-histidine.. Its function is as follows. Member of the two-component regulatory system AlgB/KinB involved in regulation of alginate biosynthesis genes. KinB functions as a membrane-associated protein kinase that phosphorylates AlgB, probably in response to environmental signals. This Pseudomonas aeruginosa protein is Alginate biosynthesis sensor protein KinB (kinB).